The sequence spans 503 residues: Putative acyl--CoA ligase YdaB (503 aa).

This sequence belongs to the ATP-dependent AMP-binding enzyme family.

This is Putative acyl--CoA ligase YdaB (ydaB) from Bacillus subtilis (strain 168).